A 450-amino-acid polypeptide reads, in one-letter code: Protein tweety homolog 1 (450 aa).

The Extracellular portion of the chain corresponds to 1 to 43 (MGAPPGYRPSAWVHLLHQLPRADFQLRPVPSAFAPQEREYQQA). The helical transmembrane segment at 44-64 (LLLVAALAGLGLGLSLIFIAV) threads the bilayer. At 65–88 (YLIRFCCCRPPEPPGAKSPPPGGG) the chain is on the cytoplasmic side. Residues 89–109 (CVTWNCIAALLVGCAGIGVGF) traverse the membrane as a helical segment. Residues 110–214 (YGNSETSDGV…DVSFVEEYRW (105 aa)) are Extracellular-facing. N-linked (GlcNAc...) asparagine glycosylation occurs at Asn130. A helical transmembrane segment spans residues 215–235 (LAYVLLLLLELLVCLFTLLGL). The Cytoplasmic portion of the chain corresponds to 236–240 (ARQSK). A helical membrane pass occupies residues 241-261 (WLVIVMTVMSLLVLVLSWGSM). At 262–390 (GLEAATAVGL…LRGLCEDTLE (129 aa)) the chain is on the extracellular side. Intrachain disulfides connect Cys275–Cys385 and Cys303–Cys370. N-linked (GlcNAc...) asparagine glycosylation is found at Asn284 and Asn355. Residues 391–411 (GLLFLLLFSLLSAGALATVLC) form a helical membrane-spanning segment. At 412 to 450 (SLPRAWALFPPSDDYEDTDDDDPFNPQESKRFVQWQSSI) the chain is on the cytoplasmic side. Positions 427–450 (EDTDDDDPFNPQESKRFVQWQSSI) are disordered. The residue at position 440 (Ser440) is a Phosphoserine.

Belongs to the tweety family. Homotetramer; disulfide-linked. Homodimer. In terms of processing, N-glycosylated. Contains high-mannose, hybrid and complex oligosaccharides.

Its subcellular location is the cell membrane. The enzyme catalyses chloride(in) = chloride(out). It carries out the reaction L-glutamate(out) = L-glutamate(in). In terms of biological role, calcium-independent, swelling-dependent volume-regulated anion channel (VRAC-swell) which plays a pivotal role in the process of regulatory volume decrease (RVD) in the brain through the efflux of anions like chloride and organic osmolytes like glutamate. The sequence is that of Protein tweety homolog 1 (TTYH1) from Bos taurus (Bovine).